Consider the following 671-residue polypeptide: ATP-dependent zinc metalloprotease FtsH (671 aa).

Over 1-22 (MANPNNNNDNKQNNNNNFFNDN) the chain is Cytoplasmic. A helical transmembrane segment spans residues 23–43 (PLLAFAIFSIVIILIFKSFVG). Residues 44 to 130 (EGESLGTMMN…ISYEGVVGNG (87 aa)) lie on the Periplasmic side of the membrane. The chain crosses the membrane as a helical span at residues 131–151 (FFSELISMMLPILIFFAIWIF). At 152–671 (LAKKMSKGMG…SEESDNNKEA (520 aa)) the chain is on the cytoplasmic side. An ATP-binding site is contributed by 224–231 (GPPGTGKT). A Zn(2+)-binding site is contributed by His-447. The active site involves Glu-448. Residues His-451 and Asp-525 each contribute to the Zn(2+) site. A disordered region spans residues 630–671 (EKGMPSRLAHKDKVAKNKAEADKKEEALKKEISEESDNNKEA).

In the central section; belongs to the AAA ATPase family. The protein in the C-terminal section; belongs to the peptidase M41 family. As to quaternary structure, homohexamer. Zn(2+) serves as cofactor.

The protein localises to the cell inner membrane. Acts as a processive, ATP-dependent zinc metallopeptidase for both cytoplasmic and membrane proteins. Plays a role in the quality control of integral membrane proteins. The protein is ATP-dependent zinc metalloprotease FtsH of Sulfurovum sp. (strain NBC37-1).